We begin with the raw amino-acid sequence, 163 residues long: Peptidyl-prolyl cis-trans isomerase (163 aa).

A PPIase cyclophilin-type domain is found at 5-162 (YFDVSSNGKP…SVLKIEDCGT (158 aa)).

The protein belongs to the cyclophilin-type PPIase family. PPIase A subfamily.

The protein localises to the cytoplasm. It carries out the reaction [protein]-peptidylproline (omega=180) = [protein]-peptidylproline (omega=0). Binds cyclosporin A (CsA). CsA mediates some of its effects via an inhibitory action on PPIase. In terms of biological role, PPIases accelerate the folding of proteins. It catalyzes the cis-trans isomerization of proline imidic peptide bonds in oligopeptides. The sequence is that of Peptidyl-prolyl cis-trans isomerase (PIG28) from Uromyces fabae (Rust fungus).